An 82-amino-acid chain; its full sequence is Acyl carrier protein (82 aa).

Positions 2 to 77 (DNVADRVKKV…QAIDYVSAHI (76 aa)) constitute a Carrier domain. Position 37 is an O-(pantetheine 4'-phosphoryl)serine (S37).

Belongs to the acyl carrier protein (ACP) family. In terms of processing, 4'-phosphopantetheine is transferred from CoA to a specific serine of apo-ACP by AcpS. This modification is essential for activity because fatty acids are bound in thioester linkage to the sulfhydryl of the prosthetic group.

Its subcellular location is the cytoplasm. It participates in lipid metabolism; fatty acid biosynthesis. Functionally, carrier of the growing fatty acid chain in fatty acid biosynthesis. This Acidithiobacillus ferrooxidans (strain ATCC 23270 / DSM 14882 / CIP 104768 / NCIMB 8455) (Ferrobacillus ferrooxidans (strain ATCC 23270)) protein is Acyl carrier protein.